A 102-amino-acid polypeptide reads, in one-letter code: Small ribosomal subunit protein uS10 (102 aa).

This sequence belongs to the universal ribosomal protein uS10 family. In terms of assembly, part of the 30S ribosomal subunit.

In terms of biological role, involved in the binding of tRNA to the ribosomes. This chain is Small ribosomal subunit protein uS10, found in Beijerinckia indica subsp. indica (strain ATCC 9039 / DSM 1715 / NCIMB 8712).